A 326-amino-acid polypeptide reads, in one-letter code: Biotin synthase (326 aa).

The Radical SAM core domain maps to 47–274 (NEVQVSSLLS…ASRVRLSAGR (228 aa)). Cysteine 62, cysteine 66, and cysteine 69 together coordinate [4Fe-4S] cluster. Cysteine 106, cysteine 137, cysteine 197, and arginine 269 together coordinate [2Fe-2S] cluster.

Belongs to the radical SAM superfamily. Biotin synthase family. Homodimer. Requires [4Fe-4S] cluster as cofactor. It depends on [2Fe-2S] cluster as a cofactor.

It catalyses the reaction (4R,5S)-dethiobiotin + (sulfur carrier)-SH + 2 reduced [2Fe-2S]-[ferredoxin] + 2 S-adenosyl-L-methionine = (sulfur carrier)-H + biotin + 2 5'-deoxyadenosine + 2 L-methionine + 2 oxidized [2Fe-2S]-[ferredoxin]. It functions in the pathway cofactor biosynthesis; biotin biosynthesis; biotin from 7,8-diaminononanoate: step 2/2. Its function is as follows. Catalyzes the conversion of dethiobiotin (DTB) to biotin by the insertion of a sulfur atom into dethiobiotin via a radical-based mechanism. The chain is Biotin synthase from Methylococcus capsulatus (strain ATCC 33009 / NCIMB 11132 / Bath).